A 238-amino-acid polypeptide reads, in one-letter code: tRNA (guanine-N(7)-)-methyltransferase (238 aa).

S-adenosyl-L-methionine-binding residues include glutamate 71, glutamate 96, aspartate 123, and aspartate 146. The active site involves aspartate 146. Substrate is bound by residues lysine 150, aspartate 182, and 217–220 (TKFE).

It belongs to the class I-like SAM-binding methyltransferase superfamily. TrmB family.

It carries out the reaction guanosine(46) in tRNA + S-adenosyl-L-methionine = N(7)-methylguanosine(46) in tRNA + S-adenosyl-L-homocysteine. It functions in the pathway tRNA modification; N(7)-methylguanine-tRNA biosynthesis. In terms of biological role, catalyzes the formation of N(7)-methylguanine at position 46 (m7G46) in tRNA. The sequence is that of tRNA (guanine-N(7)-)-methyltransferase from Methylobacillus flagellatus (strain ATCC 51484 / DSM 6875 / VKM B-1610 / KT).